The chain runs to 718 residues: Potassium channel KAT1 (718 aa).

Over 1–60 (MTQAHSKSCFHQFWDGLQIKRSSDSFTVELLPSLGATINHSNKLQKFIISPYDPRYRSWE) the chain is Cytoplasmic. A helical membrane pass occupies residues 61-81 (LFLIVLVVYSAWICPFELAFL). At 82 to 88 (RDLPSKL) the chain is on the extracellular side. The chain crosses the membrane as a helical span at residues 89–109 (LLVENIVDIFFAIDIVLTFFV). At 110–132 (AYVDSKTHLLVDDRKRIAMRYLS) the chain is on the cytoplasmic side. Residues 133 to 153 (TWFIFDVCSTAPFQPIILLFT) form a helical membrane-spanning segment. Residues 154–162 (HKGNDIAFK) are Extracellular-facing. The helical; Voltage-sensor transmembrane segment at 163–183 (VLNLLRLWRLHRVSSLFARLE) threads the bilayer. The Cytoplasmic segment spans residues 184 to 197 (KDIRFNYFWTRCSK). The helical transmembrane segment at 198-218 (LISVTLFAVHCAGCFNYMIAD) threads the bilayer. Residues 219 to 245 (RYPNPEKTWIGAVMSTFRSESLWTRYI) are Extracellular-facing. Residues 246-265 (TALYWSITTLTTTGYGDLHA) constitute an intramembrane region (pore-forming). Residues 266–269 (ENPT) are Extracellular-facing. Residues 270 to 290 (EMLFDIVYMMFNLGLTAYLIG) traverse the membrane as a helical segment. Residues 291–718 (NMTNLVVHGT…DGDHLFLLEM (428 aa)) are Cytoplasmic-facing. Position 374–493 (374–493 (LFNGVSGNFI…NILMNNLVQK (120 aa))) interacts with a nucleoside 3',5'-cyclic phosphate. Positions 560–584 (EATRSSASENENSSMTDKEENHDEV) are disordered. Over residues 562-574 (TRSSASENENSSM) the composition is skewed to polar residues. The segment covering 575 to 584 (TDKEENHDEV) has biased composition (basic and acidic residues). Positions 647–718 (RVTIHKYRHN…DGDHLFLLEM (72 aa)) constitute a KHA domain.

The protein belongs to the potassium channel family. Plant (TC 1.A.1.4) subfamily.

It is found in the membrane. Its function is as follows. Probable inward-rectifying potassium channel. Assuming opened or closed conformations in response to the voltage difference across the membrane, the channel is activated by hyperpolarization. This is Potassium channel KAT1 from Oryza sativa subsp. japonica (Rice).